The chain runs to 183 residues: Dual-action ribosomal maturation protein DarP (183 aa).

It belongs to the DarP family.

The protein localises to the cytoplasm. Member of a network of 50S ribosomal subunit biogenesis factors which assembles along the 30S-50S interface, preventing incorrect 23S rRNA structures from forming. Promotes peptidyl transferase center (PTC) maturation. The sequence is that of Dual-action ribosomal maturation protein DarP from Salmonella enteritidis PT4 (strain P125109).